We begin with the raw amino-acid sequence, 285 residues long: Undecaprenyl-diphosphatase (285 aa).

A run of 7 helical transmembrane segments spans residues 12–34, 49–69, 93–113, 120–140, 159–179, 234–254, and 263–283; these read IVIA…HAVI, IFLP…LVYF, IHIL…GGLL, LFGT…LLLL, LTYA…LPGI, VATI…AFLM, and WALS…FFIL.

This sequence belongs to the UppP family.

The protein resides in the cell inner membrane. It carries out the reaction di-trans,octa-cis-undecaprenyl diphosphate + H2O = di-trans,octa-cis-undecaprenyl phosphate + phosphate + H(+). Its function is as follows. Catalyzes the dephosphorylation of undecaprenyl diphosphate (UPP). Confers resistance to bacitracin. The chain is Undecaprenyl-diphosphatase from Gluconacetobacter diazotrophicus (strain ATCC 49037 / DSM 5601 / CCUG 37298 / CIP 103539 / LMG 7603 / PAl5).